Reading from the N-terminus, the 236-residue chain is Small ribosomal subunit protein uS3 (236 aa).

The region spanning 39–107 (IREILHKELK…DVVINIVEIR (69 aa)) is the KH type-2 domain. Residues 213–236 (MAQDKRMNEGGGESSQPRSRRDAA) form a disordered region.

It belongs to the universal ribosomal protein uS3 family. As to quaternary structure, part of the 30S ribosomal subunit. Forms a tight complex with proteins S10 and S14.

Its function is as follows. Binds the lower part of the 30S subunit head. Binds mRNA in the 70S ribosome, positioning it for translation. The sequence is that of Small ribosomal subunit protein uS3 from Bradyrhizobium sp. (strain BTAi1 / ATCC BAA-1182).